Here is an 878-residue protein sequence, read N- to C-terminus: Vacuolar membrane protease (878 aa).

Topologically, residues methionine 1–arginine 16 are cytoplasmic. The chain crosses the membrane as a helical span at residues tryptophan 17–valine 37. The Vacuolar segment spans residues histidine 38–threonine 390. Residues asparagine 53 and asparagine 119 are each glycosylated (N-linked (GlcNAc...) asparagine). Positions 174 and 186 each coordinate Zn(2+). Glutamate 220 functions as the Proton acceptor in the catalytic mechanism. Zn(2+)-binding residues include glutamate 221, glutamate 246, and histidine 319. Residues leucine 391–isoleucine 411 form a helical membrane-spanning segment. Over alanine 412 to glycine 442 the chain is Cytoplasmic. Residues phenylalanine 443–leucine 463 form a helical membrane-spanning segment. Residues valine 464 to histidine 473 are Vacuolar-facing. Residues serine 474–valine 494 traverse the membrane as a helical segment. Over serine 495 to arginine 508 the chain is Cytoplasmic. The chain crosses the membrane as a helical span at residues isoleucine 509–tyrosine 529. Residues alanine 530–arginine 533 lie on the Vacuolar side of the membrane. The chain crosses the membrane as a helical span at residues glycine 534–isoleucine 554. Residues serine 555 to glutamine 659 are Cytoplasmic-facing. Low complexity predominate over residues glycine 577 to serine 590. Residues glycine 577–serine 611 are disordered. The segment covering glycine 591–threonine 603 has biased composition (acidic residues). A helical transmembrane segment spans residues leucine 660–serine 680. Residues alanine 681 to leucine 693 lie on the Vacuolar side of the membrane. A helical transmembrane segment spans residues phenylalanine 694–isoleucine 714. Over histidine 715 to valine 721 the chain is Cytoplasmic. The helical transmembrane segment at proline 722 to phenylalanine 742 threads the bilayer. Over serine 743–aspartate 878 the chain is Vacuolar.

This sequence belongs to the peptidase M28 family. The cofactor is Zn(2+).

The protein localises to the vacuole membrane. In terms of biological role, may be involved in vacuolar sorting and osmoregulation. The polypeptide is Vacuolar membrane protease (Aspergillus flavus (strain ATCC 200026 / FGSC A1120 / IAM 13836 / NRRL 3357 / JCM 12722 / SRRC 167)).